We begin with the raw amino-acid sequence, 85 residues long: Beta-insect depressant toxin BmKITb (85 aa).

The signal sequence occupies residues 1-21 (MKLFLLLVISASMLIDGLVNA). Residues 22–82 (DGYIRGSNGC…TWKSESNTCG (61 aa)) form the LCN-type CS-alpha/beta domain. Cystine bridges form between Cys-31–Cys-81, Cys-35–Cys-56, Cys-42–Cys-63, and Cys-46–Cys-65. Position 82 is a glycine amide (Gly-82).

In terms of tissue distribution, expressed by the venom gland.

Its subcellular location is the secreted. Functionally, depressant insect beta-toxins cause a transient contraction paralysis followed by a slow flaccid paralysis. They bind voltage-independently at site-4 of sodium channels (Nav) and shift the voltage of activation toward more negative potentials thereby affecting sodium channel activation and promoting spontaneous and repetitive firing. However, this toxin has some characteristics of excitatory toxins such as bursts of activity after the membrane has been hyperpolarized. This toxin is active only on insects. This chain is Beta-insect depressant toxin BmKITb, found in Olivierus martensii (Manchurian scorpion).